Here is a 221-residue protein sequence, read N- to C-terminus: MKAVIYHAFSHKEAKDHDVQELGTQRAEAFVRAFLKQSIPHMSQQDCESHLQRKAVILEYFTRLKPKPRPKKKSKGLSAKQRRELRLFDIKPEQQRYSLFLPLHELWKQYIRDLCNGLKPDTQPQMIQAKLLKADLHGAVISVTKSKCPSYVGVTGILLQETKHVFKIITKEDHLKVIPKQNCVFTIEIDDFISYIYGSKFQLRASERSAKKFKAKGTIDL.

Ser10 is subject to Phosphoserine.

This sequence belongs to the eukaryotic/archaeal RNase P protein component 1 family. In terms of assembly, component of nuclear RNase P and RNase MRP ribonucleoproteins. RNase P consists of a catalytic RNA moiety and 10 different protein chains; POP1, POP4, POP5, POP7, RPP14, RPP21, RPP25, RPP30, RPP38 and RPP40. Within the RNase P complex, POP1, POP7 and RPP25 form the 'finger' subcomplex, POP5, RPP14, RPP40 and homodimeric RPP30 form the 'palm' subcomplex, and RPP21, POP4 and RPP38 form the 'wrist' subcomplex. All subunits of the RNase P complex interact with the catalytic RNA. Several subunits of RNase P are also part of the RNase MRP complex. RNase MRP consists of a catalytic RNA moiety and about 8 protein subunits; POP1, POP7, RPP25, RPP30, RPP38, RPP40 and possibly also POP4 and POP5.

It localises to the nucleus. Its subcellular location is the nucleolus. In terms of biological role, component of ribonuclease P, a ribonucleoprotein complex that generates mature tRNA molecules by cleaving their 5'-ends. In Rattus norvegicus (Rat), this protein is Ribonuclease P protein subunit p29 (Pop4).